A 310-amino-acid chain; its full sequence is Flavin-dependent trigonelline monooxygenase, reductase component (310 aa).

Residues 40–43, 57–63, 90–91, and Arg-97 each bind FMN; these read TANS, SIAKTSS, and FA.

It belongs to the non-flavoprotein flavin reductase family. Homodimer. The trigonelline monooxygenase is composed of a reductase component TgnA and an oxygenase component TgnB.

The catalysed reaction is a reduced flavin + NAD(+) = an oxidized flavin + NADH + 2 H(+). The enzyme catalyses FADH2 + NAD(+) = FAD + NADH + 2 H(+). It catalyses the reaction FMNH2 + NAD(+) = FMN + NADH + 2 H(+). Its activity is regulated as follows. Maximal reductase activity is achieved only upon trigonelline (TG) binding to the reductase component before interaction with NADH. It seems that TgnA undergoes an allosteric transition upon trigonelline (TG) binding accounting for the positive cooperativity toward NADH oxidation. Its function is as follows. Involved in the degradation of the pyridine ring of trigonelline (TG; N-methylnicotinate) into succinate and methylamine as carbon and nitrogen sources, respectively. TgnA catalyzes the reduction of flavin (FMN or FAD) by NADH and supplies the reduced flavin to the oxygenase component TgnB. The chain is Flavin-dependent trigonelline monooxygenase, reductase component from Acinetobacter baylyi (strain ATCC 33305 / BD413 / ADP1).